Here is an 87-residue protein sequence, read N- to C-terminus: Transcription factor ILI4 (87 aa).

Residues 1–54 (MSSRRSSRSSVSEEEINELISKLQSLLPSSRRRGANQASTTKLLKETCSYIKSL) form the bHLH domain.

The protein belongs to the bHLH protein family. Interacts with LO9-177. Expressed in phloem of leaf blades and sheaths, lamina joints, filaments before anthesis, vasculare bundles of the ovule, lemma and palea, and embryos.

It is found in the cytoplasm. Functionally, atypical and probable non DNA-binding bHLH transcription factor that acts as a positive regulator of brassinosteroid (BR) response. Controls lamina inclination by participating in two BR signaling pathways involving BRI1 and RGA1. Involved in the RLI1-dependent modulation of leaf inclination by promoting lamina joint cell elongation, especially in response to phosphate (Pi) availability. The protein is Transcription factor ILI4 (ILI4) of Oryza sativa subsp. japonica (Rice).